Consider the following 265-residue polypeptide: Mlc titration factor A (265 aa).

Zn(2+)-binding residues include His-111, His-148, His-152, and Glu-211.

This sequence belongs to the MtfA family. As to quaternary structure, interacts with Mlc. Zn(2+) serves as cofactor.

The protein resides in the cytoplasm. In terms of biological role, involved in the modulation of the activity of the glucose-phosphotransferase system (glucose-PTS). Interacts with the transcriptional repressor Mlc, preventing its interaction with DNA and leading to the modulation of expression of genes regulated by Mlc, including ptsG, which encodes the PTS system glucose-specific EIICB component. Shows zinc-dependent metallopeptidase activity. The chain is Mlc titration factor A from Escherichia coli O127:H6 (strain E2348/69 / EPEC).